The sequence spans 409 residues: Elongation factor Tu (409 aa).

Residues 10 to 214 (KPHVNIGTIG…EVDAYIPEPE (205 aa)) enclose the tr-type G domain. The G1 stretch occupies residues 19–26 (GHVDHGKT). Residue 19-26 (GHVDHGKT) participates in GTP binding. T26 is a binding site for Mg(2+). A G2 region spans residues 60–64 (GITIN). A G3 region spans residues 81-84 (DCPG). GTP-binding positions include 81 to 85 (DCPGH) and 136 to 139 (NKQD). A G4 region spans residues 136–139 (NKQD). A G5 region spans residues 174-176 (SAL).

It belongs to the TRAFAC class translation factor GTPase superfamily. Classic translation factor GTPase family. EF-Tu/EF-1A subfamily. Monomer.

The protein localises to the cytoplasm. It catalyses the reaction GTP + H2O = GDP + phosphate + H(+). GTP hydrolase that promotes the GTP-dependent binding of aminoacyl-tRNA to the A-site of ribosomes during protein biosynthesis. The sequence is that of Elongation factor Tu from Rippkaea orientalis (strain PCC 8801 / RF-1) (Cyanothece sp. (strain PCC 8801)).